We begin with the raw amino-acid sequence, 118 residues long: MPRVKRGNVARKRRKKILKLAKGFRGAQSRLFKVANQRVMQALRNAYRDRRKRKRDFRRLWITRINAAARQQGMTYSQLICNMKRANIAINRKMLAQLAVLNPEAFAKVLELASLAKK.

This sequence belongs to the bacterial ribosomal protein bL20 family.

Functionally, binds directly to 23S ribosomal RNA and is necessary for the in vitro assembly process of the 50S ribosomal subunit. It is not involved in the protein synthesizing functions of that subunit. In Trichodesmium erythraeum (strain IMS101), this protein is Large ribosomal subunit protein bL20.